The chain runs to 490 residues: Betaine aldehyde dehydrogenase (490 aa).

Positions 26, 27, and 93 each coordinate K(+). 150–152 (GAW) serves as a coordination point for NAD(+). Lys-162 (charge relay system) is an active-site residue. An NAD(+)-binding site is contributed by 176–179 (KPSE). Val-180 provides a ligand contact to K(+). Position 230 to 233 (230 to 233 (GVAS)) interacts with NAD(+). Leu-246 is a binding site for K(+). Glu-252 acts as the Proton acceptor in catalysis. Residues Gly-254, Cys-286, and Glu-387 each contribute to the NAD(+) site. The Nucleophile role is filled by Cys-286. Residue Cys-286 is modified to Cysteine sulfenic acid (-SOH). 2 residues coordinate K(+): Lys-457 and Gly-460. The active-site Charge relay system is the Glu-464.

Belongs to the aldehyde dehydrogenase family. As to quaternary structure, dimer of dimers. It depends on K(+) as a cofactor.

It catalyses the reaction betaine aldehyde + NAD(+) + H2O = glycine betaine + NADH + 2 H(+). It functions in the pathway amine and polyamine biosynthesis; betaine biosynthesis via choline pathway; betaine from betaine aldehyde: step 1/1. Involved in the biosynthesis of the osmoprotectant glycine betaine. Catalyzes the irreversible oxidation of betaine aldehyde to the corresponding acid. The sequence is that of Betaine aldehyde dehydrogenase from Escherichia coli (strain 55989 / EAEC).